A 380-amino-acid chain; its full sequence is Tryptophan--tRNA ligase 2 (380 aa).

A 'HIGH' region motif is present at residues 74–82 (PSGPMHLGH). The short motif at 249 to 253 (KMSSS) is the 'KMSKS' region element.

It belongs to the class-I aminoacyl-tRNA synthetase family.

It is found in the cytoplasm. It carries out the reaction tRNA(Trp) + L-tryptophan + ATP = L-tryptophyl-tRNA(Trp) + AMP + diphosphate + H(+). The sequence is that of Tryptophan--tRNA ligase 2 from Halobacterium salinarum (strain ATCC 700922 / JCM 11081 / NRC-1) (Halobacterium halobium).